We begin with the raw amino-acid sequence, 305 residues long: Ribosomal RNA small subunit methyltransferase H (305 aa).

Residues 30-32 (GGH), D49, F74, D96, and Q103 each bind S-adenosyl-L-methionine.

The protein belongs to the methyltransferase superfamily. RsmH family.

The protein resides in the cytoplasm. It carries out the reaction cytidine(1402) in 16S rRNA + S-adenosyl-L-methionine = N(4)-methylcytidine(1402) in 16S rRNA + S-adenosyl-L-homocysteine + H(+). Functionally, specifically methylates the N4 position of cytidine in position 1402 (C1402) of 16S rRNA. The polypeptide is Ribosomal RNA small subunit methyltransferase H (Francisella tularensis subsp. novicida (strain U112)).